Reading from the N-terminus, the 264-residue chain is Thymidylate synthase (264 aa).

Arg-21 contributes to the dUMP binding site. His-51 lines the (6R)-5,10-methylene-5,6,7,8-tetrahydrofolate pocket. Position 126–127 (126–127) interacts with dUMP; that stretch reads RR. Residue Cys-146 is the Nucleophile of the active site. Residues 166–169, Asn-177, and 207–209 each bind dUMP; these read RSAD and HLY. Asp-169 provides a ligand contact to (6R)-5,10-methylene-5,6,7,8-tetrahydrofolate. Ser-263 provides a ligand contact to (6R)-5,10-methylene-5,6,7,8-tetrahydrofolate.

Belongs to the thymidylate synthase family. Bacterial-type ThyA subfamily. As to quaternary structure, homodimer.

It localises to the cytoplasm. It catalyses the reaction dUMP + (6R)-5,10-methylene-5,6,7,8-tetrahydrofolate = 7,8-dihydrofolate + dTMP. The protein operates within pyrimidine metabolism; dTTP biosynthesis. In terms of biological role, catalyzes the reductive methylation of 2'-deoxyuridine-5'-monophosphate (dUMP) to 2'-deoxythymidine-5'-monophosphate (dTMP) while utilizing 5,10-methylenetetrahydrofolate (mTHF) as the methyl donor and reductant in the reaction, yielding dihydrofolate (DHF) as a by-product. This enzymatic reaction provides an intracellular de novo source of dTMP, an essential precursor for DNA biosynthesis. This Neisseria meningitidis serogroup B (strain ATCC BAA-335 / MC58) protein is Thymidylate synthase.